Reading from the N-terminus, the 465-residue chain is D-arabinitol 4-dehydrogenase (465 aa).

This sequence belongs to the mannitol dehydrogenase family.

The enzyme catalyses D-arabinitol + NAD(+) = D-xylulose + NADH + H(+). Its pathway is carbohydrate metabolism; D-arabinitol metabolism. This Ralstonia nicotianae (strain ATCC BAA-1114 / GMI1000) (Ralstonia solanacearum) protein is D-arabinitol 4-dehydrogenase (dalD).